Consider the following 303-residue polypeptide: L(+)-tartrate dehydratase subunit alpha (303 aa).

Residues Cys71, Cys190, and Cys277 each coordinate iron-sulfur cluster.

Belongs to the class-I fumarase family. In terms of assembly, tetramer of two alpha and two beta subunits. Requires iron-sulfur cluster as cofactor.

The catalysed reaction is (2R,3R)-tartrate = oxaloacetate + H2O. In Escherichia coli O157:H7, this protein is L(+)-tartrate dehydratase subunit alpha (ttdA).